Here is an 813-residue protein sequence, read N- to C-terminus: Calpain-7 (813 aa).

Residue methionine 1 is modified to N-acetylmethionine. Threonine 95 is modified (phosphothreonine). A Calpain catalytic domain is found at 232 to 540; sequence RERFAYPMPF…YDVVYLSWNP (309 aa). Catalysis depends on residues cysteine 290, histidine 458, and asparagine 478. The tract at residues 541 to 701 is domain III; the sequence is ALFKESTCIH…INGKWSGQSA (161 aa). Residues 702–813 are domain N; sequence GGCGNFQETH…TVPIKTTQLQ (112 aa).

It belongs to the peptidase C2 family. Ubiquitous.

It localises to the nucleus. Calcium-regulated non-lysosomal thiol-protease. This Mus musculus (Mouse) protein is Calpain-7 (Capn7).